The primary structure comprises 878 residues: Phosphoenolpyruvate carboxylase (878 aa).

Catalysis depends on residues His-140 and Lys-545.

This sequence belongs to the PEPCase type 1 family. The cofactor is Mg(2+).

The enzyme catalyses oxaloacetate + phosphate = phosphoenolpyruvate + hydrogencarbonate. In terms of biological role, forms oxaloacetate, a four-carbon dicarboxylic acid source for the tricarboxylic acid cycle. The chain is Phosphoenolpyruvate carboxylase from Pseudomonas syringae pv. syringae (strain B728a).